The primary structure comprises 469 residues: Probable monogalactosyldiacylglycerol synthase 2, chloroplastic (469 aa).

Residues 1-42 (MVISVATPRRSIRDAVLGGVLGAGGRQLYQPLRCAFYDGAAG) constitute a chloroplast transit peptide.

This sequence belongs to the glycosyltransferase 28 family.

The protein resides in the plastid. It is found in the chloroplast membrane. The enzyme catalyses a 1,2-diacyl-sn-glycerol + UDP-alpha-D-galactose = a 1,2-diacyl-3-O-(beta-D-galactosyl)-sn-glycerol + UDP + H(+). Involved in the synthesis of the major structural component of photosynthetic membranes. The polypeptide is Probable monogalactosyldiacylglycerol synthase 2, chloroplastic (MGD2) (Oryza sativa subsp. indica (Rice)).